The following is a 211-amino-acid chain: Ribonuclease T (211 aa).

An Exonuclease domain is found at 24-198 (VVVDVETGGF…YDAEKTAHLF (175 aa)). 4 residues coordinate Mg(2+): Asp27, Glu29, His185, and Asp190. The active-site Proton donor/acceptor is the His185.

Belongs to the RNase T family. Homodimer. Requires Mg(2+) as cofactor.

Its function is as follows. Trims short 3' overhangs of a variety of RNA species, leaving a one or two nucleotide 3' overhang. Responsible for the end-turnover of tRNA: specifically removes the terminal AMP residue from uncharged tRNA (tRNA-C-C-A). Also appears to be involved in tRNA biosynthesis. The polypeptide is Ribonuclease T (Xylella fastidiosa (strain Temecula1 / ATCC 700964)).